Here is a 428-residue protein sequence, read N- to C-terminus: Dihydroorotase (428 aa).

Residues His59 and His61 each coordinate Zn(2+). Residues 61 to 63 (HLR) and Asn93 contribute to the substrate site. Zn(2+) is bound by residues Asp151, His178, and His231. Asn277 is a substrate binding site. Zn(2+) is bound at residue Asp304. Asp304 is an active-site residue. Substrate is bound by residues His308 and 322 to 323 (FG).

The protein belongs to the metallo-dependent hydrolases superfamily. DHOase family. Class I DHOase subfamily. Zn(2+) is required as a cofactor.

It carries out the reaction (S)-dihydroorotate + H2O = N-carbamoyl-L-aspartate + H(+). It participates in pyrimidine metabolism; UMP biosynthesis via de novo pathway; (S)-dihydroorotate from bicarbonate: step 3/3. Catalyzes the reversible cyclization of carbamoyl aspartate to dihydroorotate. This is Dihydroorotase from Bacillus cereus (strain ZK / E33L).